A 520-amino-acid polypeptide reads, in one-letter code: Amine oxidase [flavin-containing] B (520 aa).

Ser-2 carries the N-acetylserine modification. The Cytoplasmic segment spans residues 2 to 489 (SSKCDVVVVG…TFLERHLPSV (488 aa)). Lys-52 bears the N6-acetyllysine mark. At Cys-397 the chain carries S-8alpha-FAD cysteine. A helical; Anchor for type IV membrane protein transmembrane segment spans residues 490–516 (PGLLRLIGLTAIFSATALGYLAHKRGL). At 517–520 (LVRV) the chain is on the mitochondrial intermembrane side.

This sequence belongs to the flavin monoamine oxidase family. As to quaternary structure, monomer, homo- or heterodimer (containing two subunits of similar size). Each subunit contains a covalently bound flavin. Enzymatically active as monomer. The cofactor is FAD.

It is found in the mitochondrion outer membrane. It catalyses the reaction a secondary aliphatic amine + O2 + H2O = a primary amine + an aldehyde + H2O2. The catalysed reaction is (R)-adrenaline + O2 + H2O = (R)-3,4-dihydroxymandelaldehyde + methylamine + H2O2. It carries out the reaction a primary methyl amine + O2 + H2O = an aldehyde + H2O2 + NH4(+). The enzyme catalyses benzylamine + O2 + H2O = benzaldehyde + H2O2 + NH4(+). It catalyses the reaction dopamine + O2 + H2O = 3,4-dihydroxyphenylacetaldehyde + H2O2 + NH4(+). The catalysed reaction is tyramine + O2 + H2O = (4-hydroxyphenyl)acetaldehyde + H2O2 + NH4(+). It carries out the reaction (R)-noradrenaline + O2 + H2O = (R)-3,4-dihydroxymandelaldehyde + H2O2 + NH4(+). The enzyme catalyses 2-phenylethylamine + O2 + H2O = 2-phenylacetaldehyde + H2O2 + NH4(+). It catalyses the reaction N-acetylputrescine + O2 + H2O = 4-acetamidobutanal + H2O2 + NH4(+). Functionally, catalyzes the oxidative deamination of primary and some secondary amines such as neurotransmitters, and exogenous amines including the tertiary amine, neurotoxin 1-methyl-4-phenyl-1,2,3,6-tetrahydropyridine (MPTP), with concomitant reduction of oxygen to hydrogen peroxide and participates in the metabolism of neuroactive and vasoactive amines in the central nervous system and peripheral tissues. Preferentially degrades benzylamine and phenylethylamine. This is Amine oxidase [flavin-containing] B from Sus scrofa (Pig).